The following is a 391-amino-acid chain: Cyclin-B1-2 (391 aa).

The protein belongs to the cyclin family. Cyclin AB subfamily.

This chain is Cyclin-B1-2 (CYCB1-2), found in Oryza sativa subsp. japonica (Rice).